A 200-amino-acid chain; its full sequence is Recombination protein RecR (200 aa).

Residues 58-75 form a C4-type zinc finger; sequence CPDCFCLKTSKTSSCDFC. The region spanning 82 to 177 is the Toprim domain; it reads SFLCIVATPK…KISRLALGMP (96 aa).

Belongs to the RecR family.

Functionally, may play a role in DNA repair. It seems to be involved in an RecBC-independent recombinational process of DNA repair. It may act with RecF and RecO. The chain is Recombination protein RecR from Chlamydia muridarum (strain MoPn / Nigg).